A 187-amino-acid chain; its full sequence is Ribosome maturation factor RimM (187 aa).

The PRC barrel domain maps to 96–169; it reads EDEFFYADLE…KLVIDPTAAG (74 aa).

This sequence belongs to the RimM family. In terms of assembly, binds ribosomal protein uS19.

The protein localises to the cytoplasm. An accessory protein needed during the final step in the assembly of 30S ribosomal subunit, possibly for assembly of the head region. Essential for efficient processing of 16S rRNA. May be needed both before and after RbfA during the maturation of 16S rRNA. It has affinity for free ribosomal 30S subunits but not for 70S ribosomes. This is Ribosome maturation factor RimM from Sinorhizobium medicae (strain WSM419) (Ensifer medicae).